The following is a 302-amino-acid chain: Deoxyhypusine hydroxylase (302 aa).

Position 1 is an N-acetylmethionine (methionine 1). HEAT-like PBS-type repeat units follow at residues 54–80, 87–113, 174–200, 205–231, and 238–264; these read LKHELAYCLGQMQDARAIPMLVDVLQD, VRHEAGEALGAIGDPEVLEILKQYSSD, ERYRAMFALRNAGGEEAALALAEGLHC, FRHEVGYVLGQLQHEAAVPQLAAALAR, and VRHECAEALGAIARPACLAALQAHADD. Residues histidine 56, histidine 89, and glutamate 90 each coordinate Fe cation. 3 residues coordinate Fe cation: histidine 207, histidine 240, and glutamate 241.

Belongs to the deoxyhypusine hydroxylase family. Fe(2+) is required as a cofactor.

It carries out the reaction [eIF5A protein]-deoxyhypusine + AH2 + O2 = [eIF5A protein]-hypusine + A + H2O. The protein operates within protein modification; eIF5A hypusination. Its function is as follows. Catalyzes the hydroxylation of the N(6)-(4-aminobutyl)-L-lysine intermediate produced by deoxyhypusine synthase/DHPS on a critical lysine of the eukaryotic translation initiation factor 5A/eIF-5A. This is the second step of the post-translational modification of that lysine into an unusual amino acid residue named hypusine. Hypusination is unique to mature eIF-5A factor and is essential for its function. The sequence is that of Deoxyhypusine hydroxylase from Homo sapiens (Human).